The primary structure comprises 343 residues: S-adenosylmethionine:tRNA ribosyltransferase-isomerase (343 aa).

It belongs to the QueA family. As to quaternary structure, monomer.

The protein localises to the cytoplasm. It carries out the reaction 7-aminomethyl-7-carbaguanosine(34) in tRNA + S-adenosyl-L-methionine = epoxyqueuosine(34) in tRNA + adenine + L-methionine + 2 H(+). It functions in the pathway tRNA modification; tRNA-queuosine biosynthesis. Functionally, transfers and isomerizes the ribose moiety from AdoMet to the 7-aminomethyl group of 7-deazaguanine (preQ1-tRNA) to give epoxyqueuosine (oQ-tRNA). The chain is S-adenosylmethionine:tRNA ribosyltransferase-isomerase from Stenotrophomonas maltophilia (strain R551-3).